A 28-amino-acid chain; its full sequence is Arylalkyl acylamidase (28 aa).

As to quaternary structure, homotetramer.

The catalysed reaction is an N-acetylarylalkylamine + H2O = an aralkylamine + acetate. Its activity is regulated as follows. Activated by divalent metal ions. Inhibited by certain thiol reagents. In terms of biological role, shows a strict specificity for N-acetyl arylalkylamines but not acetanilide derivatives. The sequence is that of Arylalkyl acylamidase from Pseudomonas putida (Arthrobacter siderocapsulatus).